The following is a 1083-amino-acid chain: Rho GTPase-activating protein 39 (1083 aa).

At serine 2 the chain carries N-acetylserine. WW domains are found at residues asparagine 25 to glycine 58 and arginine 63 to glycine 97. The interval lysine 110–alanine 154 is disordered. Residues arginine 117–glutamate 141 show a composition bias toward low complexity. Serine 169 carries the phosphoserine modification. Residues alanine 226 to glutamine 369 are disordered. Residues proline 245–threonine 256 are compositionally biased toward polar residues. The segment covering proline 268–glutamate 280 has biased composition (basic and acidic residues). Phosphoserine is present on residues serine 286, serine 384, serine 388, serine 406, and serine 407. Disordered regions lie at residues glycine 405–glycine 545 and methionine 570–valine 599. Composition is skewed to polar residues over residues serine 474–serine 488 and arginine 573–glycine 582. 4 positions are modified to phosphoserine: serine 604, serine 690, serine 715, and serine 726. In terms of domain architecture, MyTH4 spans tryptophan 722–lysine 879. Residues serine 890 to phenylalanine 1078 enclose the Rho-GAP domain.

The protein localises to the nucleus. This is Rho GTPase-activating protein 39 (ARHGAP39) from Homo sapiens (Human).